Consider the following 240-residue polypeptide: TATA-box-binding protein (240 aa).

The disordered stretch occupies residues 21-61; that stretch reads NTRQVWENQNRDGTKPATTFQSEEDIKRAAPESEKDTSATS. Residues 44 to 57 show a composition bias toward basic and acidic residues; the sequence is EDIKRAAPESEKDT. 2 consecutive repeat copies span residues 67–143 and 157–234.

This sequence belongs to the TBP family. In terms of assembly, binds DNA as monomer. The 1.2 MDa TFIID complex is composed of TATA binding protein (TBP) and the 14 TBP-associated factors. One copy of each TAF1, TAF2, TAF3, TAF7, TAF8, TAF11, TAF13, two copies of each TAF4, TAF5, TAF6, TAF9, TAF10, TAF12, and three copies of TAF14. Interacts with TFC8.

The protein localises to the nucleus. Functionally, general transcription factor that functions at the core of the DNA-binding general transcription factor complex TFIID. Binding of TFIID to a promoter (with or without TATA element) is the initial step in preinitiation complex (PIC) formation. TFIID plays a key role in the regulation of gene expression by RNA polymerase II through different activities such as transcription activator interaction, core promoter recognition and selectivity, TFIIA and TFIIB interaction, chromatin modification (histone acetylation by TAF1), facilitation of DNA opening and initiation of transcription. This chain is TATA-box-binding protein (SPT15), found in Saccharomyces cerevisiae (strain ATCC 204508 / S288c) (Baker's yeast).